A 445-amino-acid chain; its full sequence is Tubulin beta-1 chain (445 aa).

The GTP site is built by Q11, E69, S138, G142, T143, G144, N204, and N226. Mg(2+) is bound at residue E69. The disordered stretch occupies residues 426–445; the sequence is QDATAEDEEEYEDEEEEMAA. A compositionally biased stretch (acidic residues) spans 429-445; the sequence is TAEDEEEYEDEEEEMAA.

Belongs to the tubulin family. As to quaternary structure, dimer of alpha and beta chains. A typical microtubule is a hollow water-filled tube with an outer diameter of 25 nm and an inner diameter of 15 nM. Alpha-beta heterodimers associate head-to-tail to form protofilaments running lengthwise along the microtubule wall with the beta-tubulin subunit facing the microtubule plus end conferring a structural polarity. Microtubules usually have 13 protofilaments but different protofilament numbers can be found in some organisms and specialized cells. It depends on Mg(2+) as a cofactor.

It is found in the cytoplasm. The protein resides in the cytoskeleton. Tubulin is the major constituent of microtubules, a cylinder consisting of laterally associated linear protofilaments composed of alpha- and beta-tubulin heterodimers. Microtubules grow by the addition of GTP-tubulin dimers to the microtubule end, where a stabilizing cap forms. Below the cap, tubulin dimers are in GDP-bound state, owing to GTPase activity of alpha-tubulin. The protein is Tubulin beta-1 chain (TUBB1) of Eleusine indica (Goosegrass).